The following is a 189-amino-acid chain: ATP-dependent protease subunit HslV (189 aa).

Thr12 is a catalytic residue. Na(+) contacts are provided by Ser172, Cys175, and Thr178.

Belongs to the peptidase T1B family. HslV subfamily. As to quaternary structure, a double ring-shaped homohexamer of HslV is capped on each side by a ring-shaped HslU homohexamer. The assembly of the HslU/HslV complex is dependent on binding of ATP.

The protein resides in the cytoplasm. It catalyses the reaction ATP-dependent cleavage of peptide bonds with broad specificity.. Allosterically activated by HslU binding. Protease subunit of a proteasome-like degradation complex believed to be a general protein degrading machinery. The polypeptide is ATP-dependent protease subunit HslV (Ehrlichia chaffeensis (strain ATCC CRL-10679 / Arkansas)).